Consider the following 424-residue polypeptide: Enolase (424 aa).

Gln162 contributes to the (2R)-2-phosphoglycerate binding site. Glu204 (proton donor) is an active-site residue. Positions 241, 284, and 311 each coordinate Mg(2+). Residues Lys336, Arg365, Ser366, and Lys387 each contribute to the (2R)-2-phosphoglycerate site. The Proton acceptor role is filled by Lys336.

Belongs to the enolase family. Mg(2+) serves as cofactor.

Its subcellular location is the cytoplasm. It is found in the secreted. The protein localises to the cell surface. It carries out the reaction (2R)-2-phosphoglycerate = phosphoenolpyruvate + H2O. It participates in carbohydrate degradation; glycolysis; pyruvate from D-glyceraldehyde 3-phosphate: step 4/5. Catalyzes the reversible conversion of 2-phosphoglycerate (2-PG) into phosphoenolpyruvate (PEP). It is essential for the degradation of carbohydrates via glycolysis. The chain is Enolase from Maricaulis maris (strain MCS10) (Caulobacter maris).